The following is a 131-amino-acid chain: Small ribosomal subunit protein bS6 (131 aa).

The tract at residues 100–131 (SPMVKAKDERRSRDYSLEDANMDAEEAGDSEE) is disordered. Residues 104-115 (KAKDERRSRDYS) show a composition bias toward basic and acidic residues. A compositionally biased stretch (acidic residues) spans 119 to 131 (ANMDAEEAGDSEE).

It belongs to the bacterial ribosomal protein bS6 family.

Functionally, binds together with bS18 to 16S ribosomal RNA. The protein is Small ribosomal subunit protein bS6 of Photorhabdus laumondii subsp. laumondii (strain DSM 15139 / CIP 105565 / TT01) (Photorhabdus luminescens subsp. laumondii).